The sequence spans 301 residues: uncharacterized protein (301 aa).

Residues 1–28 form the signal peptide; the sequence is MFFREDKSVAFRLRSAALSGCATGQSDA.

This is an uncharacterized protein from Treponema pallidum (strain Nichols).